The chain runs to 369 residues: Aminomethyltransferase (369 aa).

The protein belongs to the GcvT family. The glycine cleavage system is composed of four proteins: P, T, L and H.

It catalyses the reaction N(6)-[(R)-S(8)-aminomethyldihydrolipoyl]-L-lysyl-[protein] + (6S)-5,6,7,8-tetrahydrofolate = N(6)-[(R)-dihydrolipoyl]-L-lysyl-[protein] + (6R)-5,10-methylene-5,6,7,8-tetrahydrofolate + NH4(+). Functionally, the glycine cleavage system catalyzes the degradation of glycine. The protein is Aminomethyltransferase of Xanthomonas euvesicatoria pv. vesicatoria (strain 85-10) (Xanthomonas campestris pv. vesicatoria).